The following is a 375-amino-acid chain: Zinc finger CCCH domain-containing protein 57 (375 aa).

5 consecutive C3H1-type zinc fingers follow at residues 42-70 (RHGE…HPHD), 87-115 (RIGQ…HPRN), 133-161 (RPNE…HPQT), 243-271 (RPGQ…HPRD), and 289-317 (RPGE…HPMR). Residues 352–375 (SVEAKPTSLPETTSAKDTIVDAQH) are disordered.

Its subcellular location is the nucleus. The chain is Zinc finger CCCH domain-containing protein 57 (ZFN3) from Arabidopsis thaliana (Mouse-ear cress).